We begin with the raw amino-acid sequence, 77 residues long: Acyl carrier protein (77 aa).

The Carrier domain maps to 2–77 (ADVLERVTKI…DAVTYIESHL (76 aa)). S37 is subject to O-(pantetheine 4'-phosphoryl)serine.

The protein belongs to the acyl carrier protein (ACP) family. In terms of processing, 4'-phosphopantetheine is transferred from CoA to a specific serine of apo-ACP by AcpS. This modification is essential for activity because fatty acids are bound in thioester linkage to the sulfhydryl of the prosthetic group.

The protein resides in the cytoplasm. The protein operates within lipid metabolism; fatty acid biosynthesis. Carrier of the growing fatty acid chain in fatty acid biosynthesis. The polypeptide is Acyl carrier protein (Bacillus anthracis (strain A0248)).